The sequence spans 477 residues: Proton-coupled amino acid transporter 3 (477 aa).

The Cytoplasmic segment spans residues 1–54; that stretch reads MGNVPLLREVGKCQRNMFGRSTASSKGSSNSRSSSSTSPKKGPRREADALMFIQ. The segment covering 19 to 40 has biased composition (low complexity); that stretch reads GRSTASSKGSSNSRSSSSTSPK. The segment at 19–43 is disordered; that stretch reads GRSTASSKGSSNSRSSSSTSPKKGP. A helical membrane pass occupies residues 55-75; it reads IFIHLLKSNIGTGFLGLPLAV. The Extracellular segment spans residues 76-77; the sequence is KN. Residues 78–98 form a helical membrane-spanning segment; that stretch reads AGLLVGPVSLLAIGALTVHCM. Topologically, residues 99-144 are cytoplasmic; the sequence is DILLNCACHLTQRLQRSFVNYEETTMYSLETCPSPWLRTHSVWGRY. The chain crosses the membrane as a helical span at residues 145–165; sequence VVSFLLIVTQLGFCSVYFMFL. Over 166-202 the chain is Extracellular; sequence ADNLQQIMEEAHFTSNVCQPRQSLVMTSILDTRFYML. Residues 203 to 223 form a helical membrane-spanning segment; it reads TILPFLILLVLIQNPQVLSIF. At 224–225 the chain is on the cytoplasmic side; sequence ST. Residues 226-246 traverse the membrane as a helical segment; sequence LATITTLSSLALIFEYLIQTP. Topologically, residues 247-259 are extracellular; sequence HHSNLPLVANWKT. Residues 260–280 form a helical membrane-spanning segment; it reads FLLFFGTAIFTFEGVGMVLPL. Topologically, residues 281–291 are cytoplasmic; the sequence is KSQMKSPQQFP. Residues 292–312 form a helical membrane-spanning segment; it reads AVLYLGMSFVIFLYICLGTLG. The Extracellular portion of the chain corresponds to 313 to 344; that stretch reads YMKFGTDTQASITLNLPICWLYQSVKLMYSVG. The helical transmembrane segment at 345–365 threads the bilayer; that stretch reads IFFTYALQFHVPAEIIVPYVV. Residues 366–374 lie on the Cytoplasmic side of the membrane; the sequence is SRVSENWAL. The helical transmembrane segment at 375 to 395 threads the bilayer; the sequence is FVDLTVRTALVCLTCFSAVLI. At 396 to 399 the chain is on the extracellular side; it reads PRLD. A helical transmembrane segment spans residues 400-420; sequence LVISLVGSVSSSALAIIIPPL. Over 421–432 the chain is Cytoplasmic; sequence LEIATFYSENIS. A helical transmembrane segment spans residues 433 to 453; the sequence is CATIVKDIMISILGLLGCVLG. The Extracellular segment spans residues 454–477; the sequence is TYQALYEMTQQTHFYMANSTRVHI.

Belongs to the amino acid/polyamine transporter 2 family. Specifically expressed in testis.

Its subcellular location is the membrane. The protein is Proton-coupled amino acid transporter 3 (Slc36a3) of Mus musculus (Mouse).